The following is a 1351-amino-acid chain: Spike glycoprotein (1351 aa).

The first 12 residues, 1-12 (MFLIIFILPTTL), serve as a signal peptide directing secretion. Over 13–1295 (AVIGDFNCTN…GTYEMYVKWP (1283 aa)) the chain is Extracellular. Residues 14–294 (VIGDFNCTNS…SFLSEIQCKT (281 aa)) form the BetaCoV S1-NTD domain. N-linked (GlcNAc...) asparagine; by host glycosylation is found at asparagine 19, asparagine 29, asparagine 58, asparagine 114, asparagine 132, asparagine 171, asparagine 188, asparagine 192, and asparagine 251. 3 cysteine pairs are disulfide-bonded: cysteine 20/cysteine 156, cysteine 151/cysteine 183, and cysteine 163/cysteine 242. 2 disulfides stabilise this stretch: cysteine 282-cysteine 292 and cysteine 327-cysteine 352. The region spanning 325–605 (PDCDIDNWLN…GINSGTTCSN (281 aa)) is the BetaCoV S1-CTD domain. 2 N-linked (GlcNAc...) asparagine; by host glycosylation sites follow: asparagine 335 and asparagine 355. Disulfide bonds link cysteine 370/cysteine 423 and cysteine 382/cysteine 603. Residues asparagine 433, asparagine 454, asparagine 561, asparagine 664, asparagine 684, asparagine 703, asparagine 725, asparagine 771, asparagine 776, and asparagine 793 are each glycosylated (N-linked (GlcNAc...) asparagine; by host). Fusion peptide stretches follow at residues 901–922 (SLLEDLLFNKVKLSDVGFVEAY) and 920–940 (EAYNNCTGGSEIRDLLCVQSF). The N-linked (GlcNAc...) asparagine; by host glycan is linked to asparagine 924. A disulfide bridge connects residues cysteine 925 and cysteine 936. A heptad repeat 1 region spans residues 1001–1051 (QKLIANAFNKALLSIQNGFTATNSALAKIQSVVNANAQALNSLLQQLFNKF). Residues 1030–1074 (QSVVNANAQALNSLLQQLFNKFGAISSSLQEILSRLDNLEAQVQI) are a coiled coil. Asparagine 1181, asparagine 1211, asparagine 1221, asparagine 1226, asparagine 1240, asparagine 1247, asparagine 1255, and asparagine 1276 each carry an N-linked (GlcNAc...) asparagine; by host glycan. Positions 1245-1284 (APNLTFNSHINATFLDLYYEMNVIQESIKSLNSSFINLKE) are heptad repeat 2. The stretch at 1257-1285 (TFLDLYYEMNVIQESIKSLNSSFINLKEI) forms a coiled coil. A helical transmembrane segment spans residues 1296–1316 (WYIWLLIVILFIIFLMILFFI). Over 1317 to 1351 (CCCTGCGSACFSKCHNCCDEYGGHNDFVIKASHDD) the chain is Cytoplasmic. A KxHxx motif is present at residues 1347–1351 (ASHDD).

Belongs to the betacoronaviruses spike protein family. Homotrimer; each monomer consists of a S1 and a S2 subunit. The resulting peplomers protrude from the virus surface as spikes. Specific enzymatic cleavages in vivo yield mature proteins. The precursor is processed into S1 and S2 by host cell furin or another cellular protease to yield the mature S1 and S2 proteins. Additionally, a second cleavage leads to the release of a fusion peptide after viral attachment to host cell receptor. Post-translationally, the cytoplasmic Cys-rich domain is palmitoylated. Spike glycoprotein is digested within host endosomes.

It localises to the virion membrane. It is found in the host endoplasmic reticulum-Golgi intermediate compartment membrane. Its subcellular location is the host cell membrane. In terms of biological role, attaches the virion to the cell membrane by interacting with host receptor, initiating the infection. Functionally, mediates fusion of the virion and cellular membranes by acting as a class I viral fusion protein. Under the current model, the protein has at least three conformational states: pre-fusion native state, pre-hairpin intermediate state, and post-fusion hairpin state. During viral and target cell membrane fusion, the coiled coil regions (heptad repeats) assume a trimer-of-hairpins structure, positioning the fusion peptide in close proximity to the C-terminal region of the ectodomain. The formation of this structure appears to drive apposition and subsequent fusion of viral and target cell membranes. Acts as a viral fusion peptide which is unmasked following S2 cleavage occurring upon virus endocytosis. This chain is Spike glycoprotein, found in Human coronavirus HKU1 (isolate N5) (HCoV-HKU1).